The chain runs to 153 residues: Large ribosomal subunit protein uL30 (153 aa).

Belongs to the universal ribosomal protein uL30 family. As to quaternary structure, part of the 50S ribosomal subunit.

This chain is Large ribosomal subunit protein uL30, found in Methanoculleus marisnigri (strain ATCC 35101 / DSM 1498 / JR1).